A 179-amino-acid polypeptide reads, in one-letter code: Large ribosomal subunit protein uL6 (179 aa).

It belongs to the universal ribosomal protein uL6 family. Part of the 50S ribosomal subunit.

Its function is as follows. This protein binds to the 23S rRNA, and is important in its secondary structure. It is located near the subunit interface in the base of the L7/L12 stalk, and near the tRNA binding site of the peptidyltransferase center. The polypeptide is Large ribosomal subunit protein uL6 (Prochlorococcus marinus (strain MIT 9515)).